A 156-amino-acid chain; its full sequence is Arginine repressor (156 aa).

It belongs to the ArgR family.

The protein resides in the cytoplasm. It functions in the pathway amino-acid biosynthesis; L-arginine biosynthesis [regulation]. In terms of biological role, regulates arginine biosynthesis genes. In Citrobacter koseri (strain ATCC BAA-895 / CDC 4225-83 / SGSC4696), this protein is Arginine repressor.